The chain runs to 183 residues: Orotate phosphoribosyltransferase (183 aa).

5-phospho-alpha-D-ribose 1-diphosphate-binding positions include arginine 21, lysine 88, and 112–120 (EDVVTTGES). Residues threonine 116 and arginine 144 each contribute to the orotate site.

It belongs to the purine/pyrimidine phosphoribosyltransferase family. PyrE subfamily. Homodimer. The cofactor is Mg(2+).

The enzyme catalyses orotidine 5'-phosphate + diphosphate = orotate + 5-phospho-alpha-D-ribose 1-diphosphate. Its pathway is pyrimidine metabolism; UMP biosynthesis via de novo pathway; UMP from orotate: step 1/2. Catalyzes the transfer of a ribosyl phosphate group from 5-phosphoribose 1-diphosphate to orotate, leading to the formation of orotidine monophosphate (OMP). This Thermus thermophilus (strain ATCC BAA-163 / DSM 7039 / HB27) protein is Orotate phosphoribosyltransferase.